The chain runs to 217 residues: Thiopurine S-methyltransferase (217 aa).

S-adenosyl-L-methionine contacts are provided by W11, L46, E67, and R122.

The protein belongs to the class I-like SAM-binding methyltransferase superfamily. TPMT family.

Its subcellular location is the cytoplasm. It catalyses the reaction S-adenosyl-L-methionine + a thiopurine = S-adenosyl-L-homocysteine + a thiopurine S-methylether.. The sequence is that of Thiopurine S-methyltransferase from Vibrio atlanticus (strain LGP32) (Vibrio splendidus (strain Mel32)).